The following is a 324-amino-acid chain: MSVWAIGDLQGCYDITQQLLEKIRFDPAQDTLWFCGDLVNRGGQSLETLRLVHSLRAHSVVVLGNHDLSLLAIGARSEEEQRKVNPDLQRIVLAEDRDVLLDWLRMQKLAHVDRELGWMMIHAGLAPKWTTQMAEKHAREVEQQLQGGGYRKLLRNMYGDQPGWSPGLSGYDRSRAIINLFTRMRYCTPRGRIATDDKGTPGTQAQGLYPWFEVPGRVERDLKIVCGHWSALGLTITQGVHAIDTGAVWGGKLTALQLDTDELRVVQVPGREVTAPATAPRAPRRPRERQGRQRARGGRGGGNGNGNGGNAAAPAAAPGDAPQE.

The segment at P269–E324 is disordered. Residues A282–G297 show a composition bias toward basic residues. Over residues G298–G309 the composition is skewed to gly residues. Over residues N310–E324 the composition is skewed to low complexity.

It belongs to the Ap4A hydrolase family.

The catalysed reaction is P(1),P(4)-bis(5'-adenosyl) tetraphosphate + H2O = 2 ADP + 2 H(+). Functionally, hydrolyzes diadenosine 5',5'''-P1,P4-tetraphosphate to yield ADP. In Xanthomonas campestris pv. campestris (strain ATCC 33913 / DSM 3586 / NCPPB 528 / LMG 568 / P 25), this protein is Bis(5'-nucleosyl)-tetraphosphatase, symmetrical.